We begin with the raw amino-acid sequence, 149 residues long: Oligosaccharyltransferase complex subunit ostc (149 aa).

The Cytoplasmic segment spans residues 1-32 (METLFSLPFTVLECPNVKLKKPSWLHMPSAMT). A helical membrane pass occupies residues 33–53 (VYAVVIVSYFLITGGIIYDVI). At 54-83 (VEPPSVGSMTDEHGHQRPVAFLAYRVNGQY) the chain is on the extracellular side. A helical transmembrane segment spans residues 84 to 104 (IMEGLASSFLFTMGGLGFIIL). Over 105 to 117 (DRSNAPNIPKLNR) the chain is Cytoplasmic. A helical transmembrane segment spans residues 118 to 138 (FLLLFIGFVSVLLSFFMARVF). The Extracellular portion of the chain corresponds to 139-149 (MRMKLPGYLMG).

It belongs to the OSTC family. In terms of assembly, specific component of the STT3A-containing form of the oligosaccharyltransferase (OST) complex.

It is found in the membrane. Its pathway is protein modification; protein glycosylation. Its function is as follows. Specific component of the STT3A-containing form of the oligosaccharyl transferase (OST) complex that catalyzes the initial transfer of a defined glycan (Glc(3)Man(9)GlcNAc(2) in eukaryotes) from the lipid carrier dolichol-pyrophosphate to an asparagine residue within an Asn-X-Ser/Thr consensus motif in nascent polypeptide chains, the first step in protein N-glycosylation. N-glycosylation occurs cotranslationally and the complex associates with the Sec61 complex at the channel-forming translocon complex that mediates protein translocation across the endoplasmic reticulum (ER). All subunits are required for a maximal enzyme activity. This chain is Oligosaccharyltransferase complex subunit ostc, found in Danio rerio (Zebrafish).